Consider the following 249-residue polypeptide: DNA repair protein RecO (249 aa).

This sequence belongs to the RecO family.

Functionally, involved in DNA repair and RecF pathway recombination. This is DNA repair protein RecO from Polaromonas naphthalenivorans (strain CJ2).